The following is a 354-amino-acid chain: UDP-glucose 4-epimerase GEPI42 (354 aa).

Residue 11-42 participates in NAD(+) binding; the sequence is TILVTGGAGFIGSHTVVQLLKQGFHVSIIDNL. Ser-137 contacts substrate. The active-site Proton acceptor is Tyr-161.

This sequence belongs to the NAD(P)-dependent epimerase/dehydratase family. Requires NAD(+) as cofactor.

It carries out the reaction UDP-alpha-D-glucose = UDP-alpha-D-galactose. It participates in carbohydrate metabolism; galactose metabolism. This chain is UDP-glucose 4-epimerase GEPI42, found in Cyamopsis tetragonoloba (Guar).